The chain runs to 378 residues: tRNA (guanine(26)-N(2))-dimethyltransferase (378 aa).

Positions 4 to 374 (KEVTEGKVRI…KGYEEIIRCV (371 aa)) constitute a Trm1 methyltransferase domain. Residues R44, R69, D87, D114, and A115 each coordinate S-adenosyl-L-methionine. Zn(2+) is bound by residues C246, C249, C263, and C266.

This sequence belongs to the class I-like SAM-binding methyltransferase superfamily. Trm1 family.

The catalysed reaction is guanosine(26) in tRNA + 2 S-adenosyl-L-methionine = N(2)-dimethylguanosine(26) in tRNA + 2 S-adenosyl-L-homocysteine + 2 H(+). Functionally, dimethylates a single guanine residue at position 26 of a number of tRNAs using S-adenosyl-L-methionine as donor of the methyl groups. The sequence is that of tRNA (guanine(26)-N(2))-dimethyltransferase from Saccharolobus islandicus (strain M.16.27) (Sulfolobus islandicus).